A 503-amino-acid chain; its full sequence is Aspartyl/glutamyl-tRNA(Asn/Gln) amidotransferase subunit B (503 aa).

Belongs to the GatB/GatE family. GatB subfamily. As to quaternary structure, heterotrimer of A, B and C subunits.

It catalyses the reaction L-glutamyl-tRNA(Gln) + L-glutamine + ATP + H2O = L-glutaminyl-tRNA(Gln) + L-glutamate + ADP + phosphate + H(+). The enzyme catalyses L-aspartyl-tRNA(Asn) + L-glutamine + ATP + H2O = L-asparaginyl-tRNA(Asn) + L-glutamate + ADP + phosphate + 2 H(+). Functionally, allows the formation of correctly charged Asn-tRNA(Asn) or Gln-tRNA(Gln) through the transamidation of misacylated Asp-tRNA(Asn) or Glu-tRNA(Gln) in organisms which lack either or both of asparaginyl-tRNA or glutaminyl-tRNA synthetases. The reaction takes place in the presence of glutamine and ATP through an activated phospho-Asp-tRNA(Asn) or phospho-Glu-tRNA(Gln). This is Aspartyl/glutamyl-tRNA(Asn/Gln) amidotransferase subunit B from Rhodococcus jostii (strain RHA1).